The chain runs to 360 residues: Protein Wnt-2 (360 aa).

Positions 1–25 are cleaved as a signal peptide; that stretch reads MNAPLGGIWLWLPLLLTWLTPEVSS. 11 cysteine pairs are disulfide-bonded: Cys-76-Cys-87, Cys-127-Cys-135, Cys-137-Cys-157, Cys-206-Cys-220, Cys-208-Cys-215, Cys-278-Cys-309, Cys-294-Cys-304, Cys-308-Cys-348, Cys-324-Cys-339, Cys-326-Cys-336, and Cys-331-Cys-332. Ser-212 carries the O-palmitoleoyl serine; by PORCN lipid modification. N-linked (GlcNAc...) asparagine glycosylation is present at Asn-295.

Belongs to the Wnt family. Palmitoleoylation is required for efficient binding to frizzled receptors. Depalmitoleoylation leads to Wnt signaling pathway inhibition.

It localises to the secreted. Its subcellular location is the extracellular space. The protein resides in the extracellular matrix. Its function is as follows. Ligand for members of the frizzled family of seven transmembrane receptors. Functions in the canonical Wnt signaling pathway that results in activation of transcription factors of the TCF/LEF family. Functions as a upstream regulator of FGF10 expression. Plays an important role in embryonic lung development. May contribute to embryonic brain development by regulating the proliferation of dopaminergic precursors and neurons. This is Protein Wnt-2 (WNT2) from Equus caballus (Horse).